The chain runs to 455 residues: EP1-like glycoprotein 1 (455 aa).

A signal peptide spans 1–22 (MLRFDYLLITALAISTVSVVMA). In terms of domain architecture, Bulb-type lectin spans 43–163 (TEYDASYRFL…HGKFVWQSFD (121 aa)). N-linked (GlcNAc...) asparagine glycans are attached at residues Asn-106, Asn-191, Asn-211, Asn-241, and Asn-289. Cys-374 is modified (S-nitrosocysteine). One can recognise a PAN domain in the interval 374–455 (CSGGKGKAVN…NTSSVAYIKY (82 aa)). Cystine bridges form between Cys-410–Cys-432 and Cys-414–Cys-420. N-linked (GlcNAc...) asparagine glycosylation is present at Asn-446.

It is found in the secreted. It localises to the cell wall. The protein is EP1-like glycoprotein 1 of Arabidopsis thaliana (Mouse-ear cress).